A 459-amino-acid chain; its full sequence is Ribosomal protein uS12 methylthiotransferase RimO (459 aa).

A disordered region spans residues 1 to 28 (MSTNPPDLRPDLAPKARLTQPDRPGQPT). The 111-residue stretch at 27–137 (PTIGMVSLGC…VLDAVHAAVP (111 aa)) folds into the MTTase N-terminal domain. Residues Cys-36, Cys-72, Cys-101, Cys-168, Cys-172, and Cys-175 each contribute to the [4Fe-4S] cluster site. Residues 154–387 (LTPRHFSYLK…MAKSQDISEA (234 aa)) enclose the Radical SAM core domain. The TRAM domain occupies 390-457 (AAKVAQRLEV…EYDLWGRLAP (68 aa)).

The protein belongs to the methylthiotransferase family. RimO subfamily. Requires [4Fe-4S] cluster as cofactor.

It localises to the cytoplasm. It catalyses the reaction L-aspartate(89)-[ribosomal protein uS12]-hydrogen + (sulfur carrier)-SH + AH2 + 2 S-adenosyl-L-methionine = 3-methylsulfanyl-L-aspartate(89)-[ribosomal protein uS12]-hydrogen + (sulfur carrier)-H + 5'-deoxyadenosine + L-methionine + A + S-adenosyl-L-homocysteine + 2 H(+). Its function is as follows. Catalyzes the methylthiolation of an aspartic acid residue of ribosomal protein uS12. The chain is Ribosomal protein uS12 methylthiotransferase RimO from Roseobacter denitrificans (strain ATCC 33942 / OCh 114) (Erythrobacter sp. (strain OCh 114)).